The sequence spans 388 residues: Succinate--CoA ligase [ADP-forming] subunit beta (388 aa).

An ATP-grasp domain is found at 9–243; the sequence is KQLFHRYGIP…ESQLAPLEVR (235 aa). Residues K45, 52–54, E98, V101, and E106 contribute to the ATP site; that span reads GRG. Residues N198 and D212 each coordinate Mg(2+). Substrate-binding positions include N263 and 320-322; that span reads GIM.

The protein belongs to the succinate/malate CoA ligase beta subunit family. In terms of assembly, heterotetramer of two alpha and two beta subunits. Mg(2+) serves as cofactor.

It carries out the reaction succinate + ATP + CoA = succinyl-CoA + ADP + phosphate. The enzyme catalyses GTP + succinate + CoA = succinyl-CoA + GDP + phosphate. Its pathway is carbohydrate metabolism; tricarboxylic acid cycle; succinate from succinyl-CoA (ligase route): step 1/1. Succinyl-CoA synthetase functions in the citric acid cycle (TCA), coupling the hydrolysis of succinyl-CoA to the synthesis of either ATP or GTP and thus represents the only step of substrate-level phosphorylation in the TCA. The beta subunit provides nucleotide specificity of the enzyme and binds the substrate succinate, while the binding sites for coenzyme A and phosphate are found in the alpha subunit. This is Succinate--CoA ligase [ADP-forming] subunit beta from Syntrophotalea carbinolica (strain DSM 2380 / NBRC 103641 / GraBd1) (Pelobacter carbinolicus).